Reading from the N-terminus, the 476-residue chain is Sulfite exporter TauE/SafE family protein 3 (476 aa).

12 helical membrane passes run 8-28 (WLGL…FAFV), 76-92 (FNWQ…FGAA), 99-115 (VGGG…IIGF), 120-142 (ATAI…NLRL), 151-171 (IIDY…ISIG), 172-192 (VAFN…VLFL), 257-277 (VYWK…ALQI), 291-311 (VINL…AVAL), 339-359 (FGII…FIMG), 360-380 (PLFL…TFAM), 397-417 (FPVP…WVGQ), and 433-453 (IIFI…GVGI).

Belongs to the 4-toluene sulfonate uptake permease (TSUP) (TC 2.A.102) family.

It localises to the membrane. This is Sulfite exporter TauE/SafE family protein 3 from Arabidopsis thaliana (Mouse-ear cress).